A 645-amino-acid chain; its full sequence is Developmental regulatory protein wetA (645 aa).

Disordered regions lie at residues 158–187 (SLHS…RKPK), 201–249 (TNLR…VSPP), 284–376 (YYGQ…QMHW), 461–578 (AQTF…DGAS), and 596–618 (GVAP…DRRR). A compositionally biased stretch (polar residues) spans 240-249 (TQGNLPVSPP). Composition is skewed to basic residues over residues 315-326 (QHHHHPHHHHQQ) and 351-361 (QHQHQHHHQQQ). Residues 362-373 (QHHQQQQQQQHQ) show a composition bias toward low complexity. Residues 509-518 (GPSSSPTPAD) show a composition bias toward polar residues. The span at 528–546 (SSGASVSSLRSSSGRLPAS) shows a compositional bias: low complexity. A compositionally biased stretch (polar residues) spans 562 to 572 (ISGSNSATSLG).

The protein belongs to the wetA family.

Functionally, brlA, abaA and wetA are pivotal regulators of conidiophore development and conidium maturation. They act individually and together to regulate their own expression and that of numerous other sporulation-specific genes. BrlA, abaA and wetA act together to positively regulate the expression of the Pks1 gene cluster that mediates the biosynthesis of an anthraquinone derivative pigment that contributes to conidial pigmentation that provides protection from UV radiation, heat and cold stress. In Metarhizium robertsii (strain ARSEF 23 / ATCC MYA-3075) (Metarhizium anisopliae (strain ARSEF 23)), this protein is Developmental regulatory protein wetA.